The sequence spans 379 residues: Queuine tRNA-ribosyltransferase (379 aa).

Residue Asp-94 is the Proton acceptor of the active site. Substrate contacts are provided by residues 94–98 (DSGGF), Asp-148, Gln-191, and Gly-218. Positions 249–255 (GVGSPDS) are RNA binding. Asp-268 serves as the catalytic Nucleophile. Residues 273-277 (TRIAR) form an RNA binding; important for wobble base 34 recognition region. Zn(2+)-binding residues include Cys-306, Cys-308, Cys-311, and His-337.

Belongs to the queuine tRNA-ribosyltransferase family. Homodimer. Within each dimer, one monomer is responsible for RNA recognition and catalysis, while the other monomer binds to the replacement base PreQ1. Requires Zn(2+) as cofactor.

It carries out the reaction 7-aminomethyl-7-carbaguanine + guanosine(34) in tRNA = 7-aminomethyl-7-carbaguanosine(34) in tRNA + guanine. Its pathway is tRNA modification; tRNA-queuosine biosynthesis. Its function is as follows. Catalyzes the base-exchange of a guanine (G) residue with the queuine precursor 7-aminomethyl-7-deazaguanine (PreQ1) at position 34 (anticodon wobble position) in tRNAs with GU(N) anticodons (tRNA-Asp, -Asn, -His and -Tyr). Catalysis occurs through a double-displacement mechanism. The nucleophile active site attacks the C1' of nucleotide 34 to detach the guanine base from the RNA, forming a covalent enzyme-RNA intermediate. The proton acceptor active site deprotonates the incoming PreQ1, allowing a nucleophilic attack on the C1' of the ribose to form the product. After dissociation, two additional enzymatic reactions on the tRNA convert PreQ1 to queuine (Q), resulting in the hypermodified nucleoside queuosine (7-(((4,5-cis-dihydroxy-2-cyclopenten-1-yl)amino)methyl)-7-deazaguanosine). The protein is Queuine tRNA-ribosyltransferase of Bacillus anthracis (strain CDC 684 / NRRL 3495).